Here is a 604-residue protein sequence, read N- to C-terminus: Linalool synthase Tps-5073L4, chloroplastic (604 aa).

The transit peptide at 1–36 (MSSMRIYVAIMKKPSVKHVDYVDKKASKPSWRVSSS) directs the protein to the chloroplast. The (2E)-geranyl diphosphate site is built by R323, D360, D364, R501, and D504. Positions 360 and 364 each coordinate Mg(2+). Residues 360 to 364 (DDVYD) carry the DDXXD motif motif. Positions 504, 508, and 512 each coordinate Mg(2+).

This sequence belongs to the terpene synthase family. Tpsb subfamily. Monomer. Mg(2+) is required as a cofactor. The cofactor is Mn(2+).

The protein localises to the plastid. The protein resides in the chloroplast. It carries out the reaction (2E)-geranyl diphosphate + H2O = linalool + diphosphate. It functions in the pathway secondary metabolite biosynthesis; terpenoid biosynthesis. Its function is as follows. Monoterpene synthase (mono-TPS) involved in the biosynthesis of monoterpenes natural products. Catalyzes the conversion of (2E)-geranyl diphosphate (GPP) into linalool. The chain is Linalool synthase Tps-5073L4, chloroplastic from Perilla frutescens (Beefsteak mint).